The sequence spans 287 residues: Bifunctional protein FolD (287 aa).

Residues 165-167, Thr192, and Val233 each bind NADP(+); that span reads GRG.

This sequence belongs to the tetrahydrofolate dehydrogenase/cyclohydrolase family. In terms of assembly, homodimer.

The enzyme catalyses (6R)-5,10-methylene-5,6,7,8-tetrahydrofolate + NADP(+) = (6R)-5,10-methenyltetrahydrofolate + NADPH. The catalysed reaction is (6R)-5,10-methenyltetrahydrofolate + H2O = (6R)-10-formyltetrahydrofolate + H(+). It functions in the pathway one-carbon metabolism; tetrahydrofolate interconversion. Catalyzes the oxidation of 5,10-methylenetetrahydrofolate to 5,10-methenyltetrahydrofolate and then the hydrolysis of 5,10-methenyltetrahydrofolate to 10-formyltetrahydrofolate. This is Bifunctional protein FolD from Cutibacterium acnes (strain DSM 16379 / KPA171202) (Propionibacterium acnes).